The following is a 286-amino-acid chain: uncharacterized protein (286 aa).

The first 19 residues, 1 to 19 (MISKEYISLLSALLTKGYS), serve as a signal peptide directing secretion.

This is an uncharacterized protein from Acidianus filamentous virus 2 (isolate Italy/Pozzuoli) (AFV-2).